Here is a 605-residue protein sequence, read N- to C-terminus: MFDIQEHLKKLPSEPGVYLMKDKYDHIIYVGKAISLKNRVRQYFQSSKNHTSKVKSMVKNIYKFEYIITDSELEALILECNLIKRYRPKYNVVLRDDKTYPYIKVTTNEDYPRILKVRRVLKDKAKYFGPYTNITAVNDTLELISSTYPIRSCKIDIDKAIKNKTRPCLNLHINKCLGPCTGNVSKEEYGKMIEEIIMCLSGKEEKLMELLKEKMNESSMNFRFEEAAVYRDKIKSLEEMIQKQKIDATVSDLNQDVVAMARAHNEACVQVFFIRNGKIVGREHFILEGVMDSPRASILSSFVKQFYNEQEYIPKELIIEDEIEDSSILEEWLSSKKGQKVTIRVPQKGEKKSLVEMVRKNAVEYLEKFSDMNKRKYEKSIGALEELKQILNLEKLPIRIEAYDISNIQGVDSIGSMVVYTNAKKDKKEYRRYKIKTVIGPNDYDSMAEIVDRRLKHGNLPDLILLDGGKGQVSAVKKVLELNDVDIPLWGMYKDDKHRTKGLICKEKEIELDKTTNLYRFIASIQEEVHNYAITYHRSLRNKALTKSILDDIQGIGEKRKKSLLNHFKDVDAIKKATMEELLEVDGMNKSIADNVYNFFRKEEN.

One can recognise a GIY-YIG domain in the interval 13-92 (SEPGVYLMKD…IKRYRPKYNV (80 aa)). The 36-residue stretch at 205-240 (EKLMELLKEKMNESSMNFRFEEAAVYRDKIKSLEEM) folds into the UVR domain.

The protein belongs to the UvrC family. In terms of assembly, interacts with UvrB in an incision complex.

The protein resides in the cytoplasm. Functionally, the UvrABC repair system catalyzes the recognition and processing of DNA lesions. UvrC both incises the 5' and 3' sides of the lesion. The N-terminal half is responsible for the 3' incision and the C-terminal half is responsible for the 5' incision. In Clostridioides difficile (strain 630) (Peptoclostridium difficile), this protein is UvrABC system protein C.